The chain runs to 348 residues: GTPase Obg 1 (348 aa).

The 159-residue stretch at 1–159 (MSFVDEAKIH…HCVLLKLKIV (159 aa)) folds into the Obg domain. The OBG-type G domain occupies 160–329 (SDVGIIGMPN…LHAQVKKAVV (170 aa)). Residues 166–173 (GMPNAGKS), 191–195 (FTTLE), 212–215 (DIPG), 279–282 (NKCD), and 310–312 (GDE) contribute to the GTP site. Serine 173 and threonine 193 together coordinate Mg(2+).

The protein belongs to the TRAFAC class OBG-HflX-like GTPase superfamily. OBG GTPase family. In terms of assembly, monomer. Mg(2+) is required as a cofactor.

Its subcellular location is the cytoplasm. In terms of biological role, an essential GTPase which binds GTP, GDP and possibly (p)ppGpp with moderate affinity, with high nucleotide exchange rates and a fairly low GTP hydrolysis rate. Plays a role in control of the cell cycle, stress response, ribosome biogenesis and in those bacteria that undergo differentiation, in morphogenesis control. The polypeptide is GTPase Obg 1 (Anaplasma marginale (strain St. Maries)).